Consider the following 1419-residue polypeptide: Formin-1 (1419 aa).

A microtubule-binding region spans residues 1–622 (MEGTHCTLQL…TAEPQHQSPP (622 aa)). Disordered regions lie at residues 138-194 (DWQG…MGKD), 262-331 (LGRE…KVVA), 343-641 (VVKT…TPKD), and 685-711 (SLTE…DTEE). Residues 151 to 163 (RSTHGNKKPRRSS) show a composition bias toward basic residues. A compositionally biased stretch (basic and acidic residues) spans 298–317 (SHQDPEKHPEAEKDEMEKPA). The span at 394–411 (RSSQSPAGETASISSVSA) shows a compositional bias: polar residues. Basic and acidic residues predominate over residues 425-438 (IESEKLDEAPEGKR). The mediates interaction with alpha-catenin stretch occupies residues 456-842 (NKRRAGLPLG…LNISSLSQLS (387 aa)). A compositionally biased stretch (polar residues) spans 504-517 (FNNSASQSSTHKQT). Residues 520-529 (VPSPLSPRLP) are compositionally biased toward pro residues. Polar residues predominate over residues 614-623 (AEPQHQSPPG). A compositionally biased stretch (basic and acidic residues) spans 685–694 (SLTEQDDRTP). Residues 720 to 774 (AEYQAAILHLKREHKEEIENLQAQFELRAFHIRGEHAMITARLEETIENLKHELE) adopt a coiled-coil conformation. Disordered stretches follow at residues 859 to 978 (GMAS…AIEP) and 1390 to 1419 (SEKK…VTTN). Pro residues-rich tracts occupy residues 868 to 882 (LPPP…PPLP) and 890 to 958 (PAPP…PPPG). Positions 870-957 (PPPASIPPPP…PPGLAPPPPP (88 aa)) constitute an FH1 domain. An FH2 domain is found at 972 to 1388 (RKPAIEPSCP…KMAQESVSKL (417 aa)).

The protein belongs to the formin homology family. Cappuccino subfamily. Interacts with alpha-catenin and may interact with tubulin. In terms of processing, phosphorylated on serine and possibly threonine residues.

Its subcellular location is the nucleus. It localises to the cytoplasm. The protein resides in the cell junction. The protein localises to the adherens junction. It is found in the cell membrane. Plays a role in the formation of adherens junction and the polymerization of linear actin cables. This is Formin-1 (FMN1) from Homo sapiens (Human).